Reading from the N-terminus, the 370-residue chain is Cytochrome b (370 aa).

Transmembrane regions (helical) follow at residues 25 to 45 (FGSM…FLAI), 69 to 90 (WIMQ…YTHI), 105 to 125 (WLSG…GYVL), and 170 to 190 (FFAL…IHIV). Residues His-75 and His-89 each coordinate heme b. Positions 174 and 188 each coordinate heme b. An a ubiquinone-binding site is contributed by His-193. Transmembrane regions (helical) follow at residues 218–238 (YKDM…MSFM), 280–300 (LGGT…PFTH), 312–332 (LTQI…WTAT), and 339–358 (FITI…IINP).

This sequence belongs to the cytochrome b family. In terms of assembly, the cytochrome bc1 complex contains 3 respiratory subunits (MT-CYB, CYC1 and UQCRFS1), 2 core proteins (UQCRC1 and UQCRC2) and probably 6 low-molecular weight proteins. The cofactor is heme b.

It is found in the mitochondrion inner membrane. Functionally, component of the ubiquinol-cytochrome c reductase complex (complex III or cytochrome b-c1 complex) that is part of the mitochondrial respiratory chain. The b-c1 complex mediates electron transfer from ubiquinol to cytochrome c. Contributes to the generation of a proton gradient across the mitochondrial membrane that is then used for ATP synthesis. This chain is Cytochrome b (MT-CYB), found in Micropechis ikaheca (New Guinean small-eyed snake).